The chain runs to 411 residues: Serine/threonine-protein kinase 54 (411 aa).

A phosphoserine; by PHOT1 mark is found at Ser-43 and Ser-45. One can recognise a Protein kinase domain in the interval 108 to 385 (LIIKSVIARG…EEVVAMLEAI (278 aa)). Residues 114–122 (IARGTFGTV) and Lys-135 contribute to the ATP site. The active-site Proton acceptor is the Asp-253. Residue Thr-286 is modified to Phosphothreonine.

This sequence belongs to the protein kinase superfamily. Ser/Thr protein kinase family. As to quaternary structure, binds to CBC2. Associates with PHOT2, BLUS1 and PM H(+)-ATPase (e.g. AHA1). Autophosphorylated. Phosphorylated in guard cells by HT1 in response to low CO(2) concentrations and by PHOT1 after blue light (BL) exposure. Expressed in guard cells.

It localises to the cytoplasm. Its subcellular location is the cytosol. The enzyme catalyses L-seryl-[protein] + ATP = O-phospho-L-seryl-[protein] + ADP + H(+). It carries out the reaction L-threonyl-[protein] + ATP = O-phospho-L-threonyl-[protein] + ADP + H(+). Its function is as follows. Serine/threonine protein kinase that phosphorylates proteins on serine and threonine residues. Collectively with CBC2, acts as a negative regulator of stomatal opening, probably via the inhibition of plasma membrane-type ATPases (AHA1 and AHA2) activity in guard cells, but in an abscisic acid (ABA)-independent manner. However, at low concentrations of CO(2), together with CBC2, stimulates stomatal opening via the inhibition of S-type anion channels in response to blue light (BL) and red light (RL), thus being a key component to maximize photosynthesis in the light under low CO(2) conditions. Required for temperature decrease in leaves. Downstream target of HIGH LEAF TEMPERATURE1 (HT1) during low CO(2)-induced stomatal opening. Also functions in the signaling pathways of phototropins. This chain is Serine/threonine-protein kinase 54, found in Arabidopsis thaliana (Mouse-ear cress).